Consider the following 465-residue polypeptide: Argininosuccinate lyase (465 aa).

The protein belongs to the lyase 1 family. Argininosuccinate lyase subfamily.

It localises to the cytoplasm. It carries out the reaction 2-(N(omega)-L-arginino)succinate = fumarate + L-arginine. The protein operates within amino-acid biosynthesis; L-arginine biosynthesis; L-arginine from L-ornithine and carbamoyl phosphate: step 3/3. This Nitrobacter winogradskyi (strain ATCC 25391 / DSM 10237 / CIP 104748 / NCIMB 11846 / Nb-255) protein is Argininosuccinate lyase.